The following is an 86-amino-acid chain: uncharacterized protein (86 aa).

Transmembrane regions (helical) follow at residues 4–24 (ILII…IAAV), 34–54 (MGLV…ILIN), and 64–84 (DIAY…ARVL).

It to M.jannaschii MJ1223.

The protein resides in the cell membrane. This is an uncharacterized protein from Methanothermobacter thermautotrophicus (strain ATCC 29096 / DSM 1053 / JCM 10044 / NBRC 100330 / Delta H) (Methanobacterium thermoautotrophicum).